The following is a 62-amino-acid chain: Temporin-HN1 (62 aa).

A signal peptide spans 1–22 (MFTLKKSLLLLLFLGTINLSLS). Residues 23 to 44 (EQERNAEEERRDDPEEMDAEVE) constitute a propeptide that is removed on maturation. Leucine 60 is modified (leucine amide).

As to expression, expressed by the skin glands.

The protein localises to the secreted. Has antimicrobial activity against some Gram-positive bacteria and fungi but has no activity against a range of Gram-negative bacteria except P.faecalis. Active against the Gram-positive bacteria S.aureus ATCC 25923 (MIC=37.5 uM), S.carnosus KHS (MIC=37.5 uM), B.licheniformis X39 (MIC=19 uM), R.rhodochrous X15 (MIC=4.8 uM), is virtually inactive against E.faecalis 981 (MIC=150 uM) and inactive against E.faecium 091299. Has some antimicrobial activity against the Gram-negative bacterium P.faecalis X29 (MIC=75 uM) and is inactive against E.coli, P.aeruginosa and S.typhi. Has antifungal activity against C.albicans ATCC 2002 (MIC=19 uM) and lower activity against the slime mold 090223 (MIC=75 uM). Has low hemolytic activity against human erythrocytes (LC(50)=75 uM). This chain is Temporin-HN1, found in Odorrana hainanensis (Odor frog).